A 163-amino-acid chain; its full sequence is uncharacterized protein (163 aa).

Residues 1 to 10 (MGVPRAREGR) show a composition bias toward basic and acidic residues. The segment at 1–163 (MGVPRAREGR…WSFTPLRWGS (163 aa)) is disordered.

This is an uncharacterized protein from Homo sapiens (Human).